Here is a 227-residue protein sequence, read N- to C-terminus: Ornithine decarboxylase antizyme 1 (227 aa).

This sequence belongs to the ODC antizyme family. In terms of assembly, interacts with ODC1 and thereby sterically blocks ODC homodimerization. Forms a ternary complex with PSMB4 and OAZ1 before PSMB4 is incorporated into the 20S proteasome. Interacts with AZIN2; this interaction disrupts the interaction between the antizyme and ODC1. Interacts with FAM171A1.

In terms of biological role, ornithine decarboxylase (ODC) antizyme protein that negatively regulates ODC activity and intracellular polyamine biosynthesis and uptake in response to increased intracellular polyamine levels. Binds to ODC monomers, inhibiting the assembly of the functional ODC homodimer, and targets the monomers for ubiquitin-independent proteolytic destruction by the 26S proteasome. Triggers ODC degradation by inducing the exposure of a cryptic proteasome-interacting surface of ODC. Stabilizes AZIN2 by interfering with its ubiquitination. Also inhibits cellular uptake of polyamines by inactivating the polyamine uptake transporter. SMAD1/OAZ1/PSMB4 complex mediates the degradation of the CREBBP/EP300 repressor SNIP1. Involved in the translocation of AZIN2 from ER-Golgi intermediate compartment (ERGIC) to the cytosol. This chain is Ornithine decarboxylase antizyme 1 (Oaz1), found in Mus musculus (Mouse).